Reading from the N-terminus, the 257-residue chain is MSDLESSSSSSSDEEELERCREAALPAWGLEQRPRGPEKPGVDATNAKLPANQPSLMHKVDEHEQDGNELQTTPEFRAHVAKKLGALLDSSITISEIVKEPRKSEVQQGALEDDGFRLFFTSIPGGPEKEAAPQPCRKRLPSSSSSDDGDEELRRCREAAVSASDILQESAIHGHVSVEKKKKRKLKKKAKKEDSADVAATATSKAEVGRQEKESAQLNGDQAPPGTKKKKRKKKTKKASEASLSPPTKSAAAVPSN.

Positions 1–11 (MSDLESSSSSS) are enriched in low complexity. The disordered stretch occupies residues 1 to 72 (MSDLESSSSS…HEQDGNELQT (72 aa)). The segment covering 32–41 (QRPRGPEKPG) has biased composition (basic and acidic residues). Ser-55 is subject to Phosphoserine. At Thr-73 the chain carries Phosphothreonine. Disordered regions lie at residues 120–157 (FTSIPGGPEKEAAPQPCRKRLPSSSSSDDGDEELRRCR) and 170–257 (SAIH…VPSN). Composition is skewed to basic residues over residues 180–190 (KKKKRKLKKKA) and 227–237 (TKKKKRKKKTK). The short motif at 228 to 236 (KKKKRKKKT) is the Nucleolar localization signal (NLS) element.

The protein belongs to the CUSTOS family.

It localises to the nucleus envelope. Plays a role in the regulation of Wnt signaling pathway during early development. The polypeptide is Protein CUSTOS (Bos taurus (Bovine)).